Consider the following 156-residue polypeptide: 6,7-dimethyl-8-ribityllumazine synthase (156 aa).

5-amino-6-(D-ribitylamino)uracil is bound by residues Phe-22, 56-58 (ALE), and 80-82 (AVI). 85-86 (DT) contributes to the (2S)-2-hydroxy-3-oxobutyl phosphate binding site. His-88 serves as the catalytic Proton donor. Position 113 (Phe-113) interacts with 5-amino-6-(D-ribitylamino)uracil. Arg-127 is a (2S)-2-hydroxy-3-oxobutyl phosphate binding site.

Belongs to the DMRL synthase family.

It catalyses the reaction (2S)-2-hydroxy-3-oxobutyl phosphate + 5-amino-6-(D-ribitylamino)uracil = 6,7-dimethyl-8-(1-D-ribityl)lumazine + phosphate + 2 H2O + H(+). It participates in cofactor biosynthesis; riboflavin biosynthesis; riboflavin from 2-hydroxy-3-oxobutyl phosphate and 5-amino-6-(D-ribitylamino)uracil: step 1/2. Catalyzes the formation of 6,7-dimethyl-8-ribityllumazine by condensation of 5-amino-6-(D-ribitylamino)uracil with 3,4-dihydroxy-2-butanone 4-phosphate. This is the penultimate step in the biosynthesis of riboflavin. In Leuconostoc mesenteroides subsp. mesenteroides (strain ATCC 8293 / DSM 20343 / BCRC 11652 / CCM 1803 / JCM 6124 / NCDO 523 / NBRC 100496 / NCIMB 8023 / NCTC 12954 / NRRL B-1118 / 37Y), this protein is 6,7-dimethyl-8-ribityllumazine synthase.